A 156-amino-acid polypeptide reads, in one-letter code: ATP synthase subunit b (156 aa).

Residues 7-27 form a helical membrane-spanning segment; the sequence is LIGQTVAFIIFVWFCMKFVWP.

The protein belongs to the ATPase B chain family. F-type ATPases have 2 components, F(1) - the catalytic core - and F(0) - the membrane proton channel. F(1) has five subunits: alpha(3), beta(3), gamma(1), delta(1), epsilon(1). F(0) has three main subunits: a(1), b(2) and c(10-14). The alpha and beta chains form an alternating ring which encloses part of the gamma chain. F(1) is attached to F(0) by a central stalk formed by the gamma and epsilon chains, while a peripheral stalk is formed by the delta and b chains.

It is found in the cell inner membrane. In terms of biological role, f(1)F(0) ATP synthase produces ATP from ADP in the presence of a proton or sodium gradient. F-type ATPases consist of two structural domains, F(1) containing the extramembraneous catalytic core and F(0) containing the membrane proton channel, linked together by a central stalk and a peripheral stalk. During catalysis, ATP synthesis in the catalytic domain of F(1) is coupled via a rotary mechanism of the central stalk subunits to proton translocation. Functionally, component of the F(0) channel, it forms part of the peripheral stalk, linking F(1) to F(0). The sequence is that of ATP synthase subunit b from Shewanella baltica (strain OS155 / ATCC BAA-1091).